Consider the following 196-residue polypeptide: DnaA initiator-associating protein DiaA (196 aa).

An SIS domain is found at 34-196 (LVQSLLNGNK…DNTLFPHQDD (163 aa)).

This sequence belongs to the SIS family. DiaA subfamily. In terms of assembly, homotetramer; dimer of dimers.

In terms of biological role, required for the timely initiation of chromosomal replication via direct interactions with the DnaA initiator protein. This chain is DnaA initiator-associating protein DiaA, found in Yersinia enterocolitica serotype O:8 / biotype 1B (strain NCTC 13174 / 8081).